A 131-amino-acid chain; its full sequence is Small ribosomal subunit protein uS11 (131 aa).

It belongs to the universal ribosomal protein uS11 family. As to quaternary structure, part of the 30S ribosomal subunit. Interacts with proteins S7 and S18. Binds to IF-3.

Functionally, located on the platform of the 30S subunit, it bridges several disparate RNA helices of the 16S rRNA. Forms part of the Shine-Dalgarno cleft in the 70S ribosome. The protein is Small ribosomal subunit protein uS11 of Geobacter sulfurreducens (strain ATCC 51573 / DSM 12127 / PCA).